The following is a 966-amino-acid chain: Leucine--tRNA ligase (966 aa).

Positions 41-51 (PYLNGNLHAGH) match the 'HIGH' region motif. The 'KMSKS' region signature appears at 632-636 (KMSKS). Lysine 635 lines the ATP pocket.

The protein belongs to the class-I aminoacyl-tRNA synthetase family.

Its subcellular location is the cytoplasm. It carries out the reaction tRNA(Leu) + L-leucine + ATP = L-leucyl-tRNA(Leu) + AMP + diphosphate. This Methanosarcina barkeri (strain Fusaro / DSM 804) protein is Leucine--tRNA ligase.